Consider the following 132-residue polypeptide: Small ribosomal subunit protein uS8 (132 aa).

It belongs to the universal ribosomal protein uS8 family. In terms of assembly, part of the 30S ribosomal subunit. Contacts proteins S5 and S12.

In terms of biological role, one of the primary rRNA binding proteins, it binds directly to 16S rRNA central domain where it helps coordinate assembly of the platform of the 30S subunit. The polypeptide is Small ribosomal subunit protein uS8 (Streptococcus mutans serotype c (strain ATCC 700610 / UA159)).